The following is an 87-amino-acid chain: Toxin CngtIII (87 aa).

Residues Met-1 to Ala-19 form the signal peptide. The region spanning Lys-20–Ser-85 is the LCN-type CS-alpha/beta domain. 4 cysteine pairs are disulfide-bonded: Cys-31–Cys-84, Cys-35–Cys-60, Cys-44–Cys-65, and Cys-48–Cys-67.

This sequence belongs to the long (4 C-C) scorpion toxin superfamily. Sodium channel inhibitor family. Beta subfamily. As to expression, expressed by the venom gland.

The protein resides in the secreted. Functionally, beta toxins bind voltage-independently at site-4 of sodium channels (Nav) and shift the voltage of activation toward more negative potentials thereby affecting sodium channel activation and promoting spontaneous and repetitive firing. The polypeptide is Toxin CngtIII (Centruroides noxius (Mexican scorpion)).